The sequence spans 261 residues: Taurine import ATP-binding protein TauB (261 aa).

Positions 4–233 constitute an ABC transporter domain; the sequence is LQLERIGAQY…RYAAGESARA (230 aa). Position 38-45 (38-45) interacts with ATP; it reads GPSGSGKT.

This sequence belongs to the ABC transporter superfamily. Taurine importer (TC 3.A.1.17.1) family. In terms of assembly, the complex is composed of two ATP-binding proteins (TauB), two transmembrane proteins (TauC) and a solute-binding protein (TauA).

The protein resides in the cell inner membrane. The catalysed reaction is taurine(out) + ATP + H2O = taurine(in) + ADP + phosphate + H(+). Part of the ABC transporter complex TauABC involved in taurine import. Responsible for energy coupling to the transport system. In Pseudomonas savastanoi pv. phaseolicola (strain 1448A / Race 6) (Pseudomonas syringae pv. phaseolicola (strain 1448A / Race 6)), this protein is Taurine import ATP-binding protein TauB.